The following is a 298-amino-acid chain: Zinc import ATP-binding protein ZnuC (298 aa).

The 216-residue stretch at 17-232 (IELRNAGVYR…PEYVRLFGSR (216 aa)) folds into the ABC transporter domain. Residue 49–56 (GQNGAGKS) participates in ATP binding. The segment at 273 to 298 (RGHCHVEDGHHHDHEHHHHEGGQPRA) is disordered. Basic and acidic residues predominate over residues 276–298 (CHVEDGHHHDHEHHHHEGGQPRA).

It belongs to the ABC transporter superfamily. Zinc importer (TC 3.A.1.15.5) family. In terms of assembly, the complex is composed of two ATP-binding proteins (ZnuC), two transmembrane proteins (ZnuB) and a solute-binding protein (ZnuA).

It is found in the cell inner membrane. It carries out the reaction Zn(2+)(out) + ATP(in) + H2O(in) = Zn(2+)(in) + ADP(in) + phosphate(in) + H(+)(in). Its function is as follows. Part of the ABC transporter complex ZnuABC involved in zinc import. Responsible for energy coupling to the transport system. The protein is Zinc import ATP-binding protein ZnuC of Brucella melitensis biotype 1 (strain ATCC 23456 / CCUG 17765 / NCTC 10094 / 16M).